We begin with the raw amino-acid sequence, 679 residues long: UvrABC system protein B (679 aa).

Positions 25 to 190 constitute a Helicase ATP-binding domain; the sequence is EGVNQGQRYQ…SRNDFDITRG (166 aa). 38-45 serves as a coordination point for ATP; it reads GATGTGKT. The Beta-hairpin signature appears at 91–114; the sequence is YYDYYQPEAYVPVSDTYIAKTASI. In terms of domain architecture, Helicase C-terminal spans 429–591; sequence QVDDLLAEIR…IVPRPAGKRA (163 aa). The UVR domain maps to 639 to 674; sequence PELIDQLETKMKEAAKNLNFEEAASLRDRIKKFRQK.

This sequence belongs to the UvrB family. Forms a heterotetramer with UvrA during the search for lesions. Interacts with UvrC in an incision complex.

The protein localises to the cytoplasm. Its function is as follows. The UvrABC repair system catalyzes the recognition and processing of DNA lesions. A damage recognition complex composed of 2 UvrA and 2 UvrB subunits scans DNA for abnormalities. Upon binding of the UvrA(2)B(2) complex to a putative damaged site, the DNA wraps around one UvrB monomer. DNA wrap is dependent on ATP binding by UvrB and probably causes local melting of the DNA helix, facilitating insertion of UvrB beta-hairpin between the DNA strands. Then UvrB probes one DNA strand for the presence of a lesion. If a lesion is found the UvrA subunits dissociate and the UvrB-DNA preincision complex is formed. This complex is subsequently bound by UvrC and the second UvrB is released. If no lesion is found, the DNA wraps around the other UvrB subunit that will check the other stand for damage. The sequence is that of UvrABC system protein B from Prochlorococcus marinus (strain MIT 9303).